We begin with the raw amino-acid sequence, 461 residues long: Asparagine--tRNA ligase (461 aa).

This sequence belongs to the class-II aminoacyl-tRNA synthetase family. As to quaternary structure, homodimer.

Its subcellular location is the cytoplasm. It carries out the reaction tRNA(Asn) + L-asparagine + ATP = L-asparaginyl-tRNA(Asn) + AMP + diphosphate + H(+). This is Asparagine--tRNA ligase from Geobacter sulfurreducens (strain ATCC 51573 / DSM 12127 / PCA).